The sequence spans 1038 residues: Probable ubiquitin conjugation factor E4 (1038 aa).

Disordered regions lie at residues 430–459 and 1010–1038; these read ANDA…ASGQ and SHQS…MLID. Residues 446-459 show a composition bias toward low complexity; sequence SKEATSSSSNASGQ. Residues 940-1014 form the U-box domain; sequence EIPDEFLDPI…DEFVKSHQSK (75 aa). The segment covering 1017 to 1028 has biased composition (basic and acidic residues); it reads TSGEDSSNKERI. The span at 1029-1038 shows a compositional bias: polar residues; the sequence is QTTNSDMLID.

This sequence belongs to the ubiquitin conjugation factor E4 family.

Its subcellular location is the cytoplasm. The protein resides in the nucleus. The enzyme catalyses S-ubiquitinyl-[E2 ubiquitin-conjugating enzyme]-L-cysteine + [acceptor protein]-L-lysine = [E2 ubiquitin-conjugating enzyme]-L-cysteine + N(6)-ubiquitinyl-[acceptor protein]-L-lysine.. The protein operates within protein modification; protein ubiquitination. Functionally, ubiquitin-protein ligase that may function as an E3 ligase in conjunction with specific E1 and E2 ligases. May also function as an E4 ligase mediating the assembly of polyubiquitin chain assembly on substrates monoubiquitinated by another E3 ubiquitin ligase. The chain is Probable ubiquitin conjugation factor E4 (PUB1) from Arabidopsis thaliana (Mouse-ear cress).